Reading from the N-terminus, the 162-residue chain is Disulfide bond formation protein B (162 aa).

Topologically, residues 1–10 (MGDWLLRRRG) are cytoplasmic. The chain crosses the membrane as a helical span at residues 11–27 (LALLLVLTLLLNLGALG). The Periplasmic portion of the chain corresponds to 28-45 (LEYLADMPPCPLCWVQRG). Cys37 and Cys40 are joined by a disulfide. The chain crosses the membrane as a helical span at residues 46–62 (VFGLMSLVALVGLVYFP). Residues 63-68 (RGWGRW) lie on the Cytoplasmic side of the membrane. The helical transmembrane segment at 69 to 86 (PLAGALGLSALTGVIIAL) threads the bilayer. Topologically, residues 87–140 (RHLYIQANPDAVSCGMSPEVLAQFLPWWEVLLEILSGTTDCTQVDAVLGVPLPG) are periplasmic. The cysteines at positions 100 and 127 are disulfide-linked. The helical transmembrane segment at 141–159 (WTLVGYLALGALGLYAVLA) threads the bilayer. Over 160–162 (RRA) the chain is Cytoplasmic.

It belongs to the DsbB family.

The protein resides in the cell inner membrane. Its function is as follows. Required for disulfide bond formation in some periplasmic proteins. Acts by oxidizing the DsbA protein. This Alkalilimnicola ehrlichii (strain ATCC BAA-1101 / DSM 17681 / MLHE-1) protein is Disulfide bond formation protein B.